Reading from the N-terminus, the 453-residue chain is Asparagine--tRNA ligase (453 aa).

This sequence belongs to the class-II aminoacyl-tRNA synthetase family. Homodimer.

Its subcellular location is the cytoplasm. It catalyses the reaction tRNA(Asn) + L-asparagine + ATP = L-asparaginyl-tRNA(Asn) + AMP + diphosphate + H(+). This Malacoplasma penetrans (strain HF-2) (Mycoplasma penetrans) protein is Asparagine--tRNA ligase.